We begin with the raw amino-acid sequence, 498 residues long: Glycerol kinase (498 aa).

T13 lines the ADP pocket. ATP is bound by residues T13, T14, and S15. T13 contributes to the sn-glycerol 3-phosphate binding site. R17 lines the ADP pocket. Residues R83, E84, Y135, and D244 each contribute to the sn-glycerol 3-phosphate site. Glycerol contacts are provided by R83, E84, Y135, D244, and Q245. T266 and G309 together coordinate ADP. ATP-binding residues include T266, G309, Q313, and G410. ADP is bound by residues G410 and N414.

The protein belongs to the FGGY kinase family. As to quaternary structure, homotetramer and homodimer (in equilibrium).

The catalysed reaction is glycerol + ATP = sn-glycerol 3-phosphate + ADP + H(+). Its pathway is polyol metabolism; glycerol degradation via glycerol kinase pathway; sn-glycerol 3-phosphate from glycerol: step 1/1. Activated by phosphorylation and inhibited by fructose 1,6-bisphosphate (FBP). Functionally, key enzyme in the regulation of glycerol uptake and metabolism. Catalyzes the phosphorylation of glycerol to yield sn-glycerol 3-phosphate. This chain is Glycerol kinase, found in Symbiobacterium thermophilum (strain DSM 24528 / JCM 14929 / IAM 14863 / T).